The chain runs to 101 residues: Urease subunit beta (101 aa).

Belongs to the urease beta subunit family. Heterotrimer of UreA (gamma), UreB (beta) and UreC (alpha) subunits. Three heterotrimers associate to form the active enzyme.

The protein resides in the cytoplasm. It catalyses the reaction urea + 2 H2O + H(+) = hydrogencarbonate + 2 NH4(+). It functions in the pathway nitrogen metabolism; urea degradation; CO(2) and NH(3) from urea (urease route): step 1/1. The polypeptide is Urease subunit beta (Pseudomonas aeruginosa (strain LESB58)).